The following is a 628-amino-acid chain: MKQLLCYLPWLLLLTLLVSPLNDARFVVEKNSLSVTSPESIKGTHDSAIGNFGIPQYGGSMAGTVVYPKENQKSCKEFSDFSISFKSQPGALPTFLLVDRGDCFFALKVWNAQKAGASAVLVADNVDEPLITMDTPEEDVSSAKYIENITIPSALVTKGFGEKLKKAISGGDMVNLNLDWREAVPHPDDRVEYELWTNSNDECGVKCDMLMEFVKDFKGAAQILEKGGFTQFRPHYITWYCPHAFTLSRQCKSQCINKGRYCAPDPEQDFSSGYDGKDVVVENLRQLCVYKVANETGKPWVWWDYVTDFQIRCPMKEKKYNKECADSVIKSLGIDSKKLDKCMGDPDADLDNPVLKEEQDAQVGKGSRGDVTILPTLVVNNRQYRGKLEKSAVLKALCSGFEETTEPAICLSTDVESNECLDNNGGCWQDKSANITACKDTFRGRVCECPTVDGVQFKGDGYSHCEPSGPGRCTINNGGCWHEERDGHAFSACVDKDSVKCECPPGFKGDGTKKCEDINECKEKKACQCPECSCKNTWGSYECSCSGDLLYIRDHDTCISKTGAQVRSAWAAVWLIMLSLGLAAAGAYLVYKYRLRQYMDSEIRAIMAQYMPLDSQPEIPNHVNDERA.

Positions 1–24 (MKQLLCYLPWLLLLTLLVSPLNDA) are cleaved as a signal peptide. The Lumenal segment spans residues 25–569 (RFVVEKNSLS…SKTGAQVRSA (545 aa)). A PA domain is found at 56–168 (QYGGSMAGTV…GFGEKLKKAI (113 aa)). N-linked (GlcNAc...) asparagine glycans are attached at residues Asn148, Asn294, and Asn434. EGF-like domains are found at residues 416 to 466 (ESNE…SHCE) and 469 to 516 (GPGR…KKCE). Cystine bridges form between Cys420/Cys438, Cys427/Cys447, Cys449/Cys465, Cys473/Cys493, Cys480/Cys501, Cys503/Cys515, and Cys545/Cys558. One can recognise an EGF-like 3; calcium-binding domain in the interval 517–559 (DINECKEKKACQCPECSCKNTWGSYECSCSGDLLYIRDHDTCI). The helical transmembrane segment at 570–590 (WAAVWLIMLSLGLAAAGAYLV) threads the bilayer. Residues 591 to 628 (YKYRLRQYMDSEIRAIMAQYMPLDSQPEIPNHVNDERA) are Cytoplasmic-facing. A Tyrosine-based internalization motif motif is present at residues 610–613 (YMPL).

This sequence belongs to the VSR (BP-80) family. As to expression, expressed in seeds, seedlings, roots, leaves, flowers and siliques.

Its subcellular location is the membrane. The protein localises to the golgi apparatus membrane. It is found in the cytoplasmic vesicle. The protein resides in the clathrin-coated vesicle membrane. It localises to the prevacuolar compartment membrane. Functionally, vacuolar-sorting receptor (VSR) involved in clathrin-coated vesicles sorting from Golgi apparatus to vacuoles. The sequence is that of Vacuolar-sorting receptor 3 (VSR3) from Arabidopsis thaliana (Mouse-ear cress).